The chain runs to 89 residues: Small ribosomal subunit protein uS15 (89 aa).

The segment covering 1–18 (MALSAQEKDAIVKEHQTS) has biased composition (basic and acidic residues). Residues 1–25 (MALSAQEKDAIVKEHQTSETDTGSP) form a disordered region.

The protein belongs to the universal ribosomal protein uS15 family. As to quaternary structure, part of the 30S ribosomal subunit. Forms a bridge to the 50S subunit in the 70S ribosome, contacting the 23S rRNA.

Functionally, one of the primary rRNA binding proteins, it binds directly to 16S rRNA where it helps nucleate assembly of the platform of the 30S subunit by binding and bridging several RNA helices of the 16S rRNA. Forms an intersubunit bridge (bridge B4) with the 23S rRNA of the 50S subunit in the ribosome. This is Small ribosomal subunit protein uS15 from Teredinibacter turnerae (strain ATCC 39867 / T7901).